The following is a 1150-amino-acid chain: ATP-dependent helicase/deoxyribonuclease subunit B (1150 aa).

8 to 15 is a binding site for ATP; that stretch reads GRSGSGKS. Positions 789, 1108, 1111, and 1117 each coordinate [4Fe-4S] cluster.

This sequence belongs to the helicase family. AddB/RexB type 1 subfamily. In terms of assembly, heterodimer of AddA and AddB. The cofactor is Mg(2+). [4Fe-4S] cluster is required as a cofactor.

The heterodimer acts as both an ATP-dependent DNA helicase and an ATP-dependent, dual-direction single-stranded exonuclease. Recognizes the chi site generating a DNA molecule suitable for the initiation of homologous recombination. The AddB subunit has 5' -&gt; 3' nuclease activity but not helicase activity. This Clostridium tetani (strain Massachusetts / E88) protein is ATP-dependent helicase/deoxyribonuclease subunit B.